Here is a 120-residue protein sequence, read N- to C-terminus: uncharacterized protein (120 aa).

It localises to the mitochondrion. This is an uncharacterized protein from Arabidopsis thaliana (Mouse-ear cress).